We begin with the raw amino-acid sequence, 264 residues long: Thymidylate synthase (264 aa).

DUMP is bound at residue Arg21. His51 serves as a coordination point for (6R)-5,10-methylene-5,6,7,8-tetrahydrofolate. 126–127 provides a ligand contact to dUMP; that stretch reads RR. Cys146 serves as the catalytic Nucleophile. DUMP-binding positions include 166 to 169, Asn177, and 207 to 209; these read RSAD and HLY. Asp169 serves as a coordination point for (6R)-5,10-methylene-5,6,7,8-tetrahydrofolate. Ala263 serves as a coordination point for (6R)-5,10-methylene-5,6,7,8-tetrahydrofolate.

This sequence belongs to the thymidylate synthase family. Bacterial-type ThyA subfamily. As to quaternary structure, homodimer.

Its subcellular location is the cytoplasm. It carries out the reaction dUMP + (6R)-5,10-methylene-5,6,7,8-tetrahydrofolate = 7,8-dihydrofolate + dTMP. Its pathway is pyrimidine metabolism; dTTP biosynthesis. Functionally, catalyzes the reductive methylation of 2'-deoxyuridine-5'-monophosphate (dUMP) to 2'-deoxythymidine-5'-monophosphate (dTMP) while utilizing 5,10-methylenetetrahydrofolate (mTHF) as the methyl donor and reductant in the reaction, yielding dihydrofolate (DHF) as a by-product. This enzymatic reaction provides an intracellular de novo source of dTMP, an essential precursor for DNA biosynthesis. This chain is Thymidylate synthase, found in Methylobacterium nodulans (strain LMG 21967 / CNCM I-2342 / ORS 2060).